The sequence spans 239 residues: Orotidine 5'-phosphate decarboxylase (239 aa).

Substrate is bound by residues Asp15, Lys36, Asp63–Thr72, Thr127, Arg189, Gln198, Gly218, and Arg219. The Proton donor role is filled by Lys65.

It belongs to the OMP decarboxylase family. Type 1 subfamily. Homodimer.

The catalysed reaction is orotidine 5'-phosphate + H(+) = UMP + CO2. Its pathway is pyrimidine metabolism; UMP biosynthesis via de novo pathway; UMP from orotate: step 2/2. Catalyzes the decarboxylation of orotidine 5'-monophosphate (OMP) to uridine 5'-monophosphate (UMP). In Prochlorococcus marinus subsp. pastoris (strain CCMP1986 / NIES-2087 / MED4), this protein is Orotidine 5'-phosphate decarboxylase.